Reading from the N-terminus, the 373-residue chain is Integrator complex subunit 15 (373 aa).

The protein belongs to the Integrator subunit 15 family. In terms of assembly, belongs to the multiprotein complex Integrator, at least composed of IntS1, IntS2, IntS3, IntS4, omd/IntS5, IntS6, defl/IntS7, IntS8, IntS9, IntS10, IntS11, IntS12, asun/IntS13, IntS14 and IntS15. The core complex associates with protein phosphatase 2A subunits mts/PP2A and Pp2A-29B, to form the Integrator-PP2A (INTAC) complex.

Its subcellular location is the nucleus. Its function is as follows. Component of the integrator complex, a multiprotein complex that terminates RNA polymerase II (Pol II) transcription in the promoter-proximal region of genes. The integrator complex provides a quality checkpoint during transcription elongation by driving premature transcription termination of transcripts that are unfavorably configured for transcriptional elongation: the complex terminates transcription by (1) catalyzing dephosphorylation of the C-terminal domain (CTD) of Pol II subunit Rbp1 and Spt5, and (2) degrading the exiting nascent RNA transcript via endonuclease activity. The integrator complex is also involved in the 3'-end processing of the U7 snRNA, and also the spliceosomal snRNAs U1, U2, U4 and U5. This is Integrator complex subunit 15 from Drosophila melanogaster (Fruit fly).